We begin with the raw amino-acid sequence, 299 residues long: Homoserine kinase (299 aa).

ATP is bound at residue Pro84–Ala94.

The protein belongs to the GHMP kinase family. Homoserine kinase subfamily.

The protein resides in the cytoplasm. The catalysed reaction is L-homoserine + ATP = O-phospho-L-homoserine + ADP + H(+). Its pathway is amino-acid biosynthesis; L-threonine biosynthesis; L-threonine from L-aspartate: step 4/5. Functionally, catalyzes the ATP-dependent phosphorylation of L-homoserine to L-homoserine phosphate. This chain is Homoserine kinase, found in Helicobacter hepaticus (strain ATCC 51449 / 3B1).